Consider the following 210-residue polypeptide: Putative polysaccharide-binding protein (210 aa).

An N-terminal signal peptide occupies residues 1-22 (MGFLKGTAAALTLLSAAAAASA). CBM1 domains are found at residues 23 to 62 (CGVLYEQCGGIGFDGVTCCSEGLMCMKMGPYYSQCRAMPG), 63 to 105 (MMGQ…LANK), 125 to 165 (CGKE…APPP), and 166 to 210 (KMGE…PMHP).

The sequence is that of Putative polysaccharide-binding protein from Porphyra purpurea (Red seaweed).